The chain runs to 264 residues: Thymidylate synthase (264 aa).

A dUMP-binding site is contributed by Arg21. (6R)-5,10-methylene-5,6,7,8-tetrahydrofolate is bound at residue His51. Residue 126–127 (RR) coordinates dUMP. Cys146 acts as the Nucleophile in catalysis. DUMP is bound by residues 166 to 169 (RSAD), Asn177, and 207 to 209 (HLY). A (6R)-5,10-methylene-5,6,7,8-tetrahydrofolate-binding site is contributed by Asp169. Residue Ala263 participates in (6R)-5,10-methylene-5,6,7,8-tetrahydrofolate binding.

This sequence belongs to the thymidylate synthase family. Bacterial-type ThyA subfamily. In terms of assembly, homodimer.

It localises to the cytoplasm. The enzyme catalyses dUMP + (6R)-5,10-methylene-5,6,7,8-tetrahydrofolate = 7,8-dihydrofolate + dTMP. It functions in the pathway pyrimidine metabolism; dTTP biosynthesis. Catalyzes the reductive methylation of 2'-deoxyuridine-5'-monophosphate (dUMP) to 2'-deoxythymidine-5'-monophosphate (dTMP) while utilizing 5,10-methylenetetrahydrofolate (mTHF) as the methyl donor and reductant in the reaction, yielding dihydrofolate (DHF) as a by-product. This enzymatic reaction provides an intracellular de novo source of dTMP, an essential precursor for DNA biosynthesis. This Pseudomonas aeruginosa (strain LESB58) protein is Thymidylate synthase.